A 193-amino-acid chain; its full sequence is Recombination protein RecR (193 aa).

The C4-type zinc-finger motif lies at 61-76 (CSSCNALSESEVCEIC). One can recognise a Toprim domain in the interval 84 to 170 (SQLCMVLHPR…TFTKIAQGVP (87 aa)).

The protein belongs to the RecR family.

Functionally, may play a role in DNA repair. It seems to be involved in an RecBC-independent recombinational process of DNA repair. It may act with RecF and RecO. This is Recombination protein RecR from Helicobacter pylori (strain G27).